Consider the following 333-residue polypeptide: Homeobox protein engrailed-1 (333 aa).

Positions 1–14 are enriched in basic and acidic residues; it reads MEEPPEGHGHHRDA. Disordered stretches follow at residues 1-184 and 226-247; these read MEEP…AAKY and RPSS…DKRP. Positions 20–31 are enriched in gly residues; the sequence is ANGGGGGGGGSD. A compositionally biased stretch (pro residues) spans 38 to 66; sequence SPSPAPASPAAPCPLPLPRRRPPPPPPPR. Residues 94–104 are compositionally biased toward gly residues; sequence TGAGGGGGGGG. Over residues 144–173 the composition is skewed to low complexity; that stretch reads DGSAPAGTAAKANPGTAAGAAGAAGAAKAQ. A DNA-binding region (homeobox) is located at residues 244–303; it reads DKRPRTAFTAEQLQRLKAEFQANRYITEQRRQSLAQELSLNESRVKIWFQNKRAKIKKAT.

It belongs to the engrailed homeobox family.

Its subcellular location is the nucleus. In terms of biological role, required for proper formation of the apical ectodermal ridge and correct dorsal-ventral patterning in the limb. The sequence is that of Homeobox protein engrailed-1 (EN1) from Gallus gallus (Chicken).